The following is a 411-amino-acid chain: Argininosuccinate lyase (411 aa).

This sequence belongs to the lyase 1 family. Argininosuccinate lyase subfamily.

It localises to the cytoplasm. The catalysed reaction is 2-(N(omega)-L-arginino)succinate = fumarate + L-arginine. It functions in the pathway amino-acid biosynthesis; L-arginine biosynthesis; L-arginine from L-ornithine and carbamoyl phosphate: step 3/3. This is Argininosuccinate lyase from Legionella pneumophila (strain Paris).